The sequence spans 630 residues: Cytochrome B pre-mRNA-processing protein 2 (630 aa).

The protein resides in the mitochondrion. Its function is as follows. Appears to be specifically required for the splicing of the terminal intron (bI5) of the cytochrome b pre-mRNA. Can also stimulates the splicing of the omega intron of the precursor of large ribosomal RNA. This chain is Cytochrome B pre-mRNA-processing protein 2 (CBP2), found in Saccharomyces paradoxus (Yeast).